Here is a 260-residue protein sequence, read N- to C-terminus: Acidic leucine-rich nuclear phosphoprotein 32 family member E (260 aa).

The residue at position 1 (Met-1) is an N-acetylmethionine. 4 LRR repeats span residues 18–38 (EVTELVLDNCLCVNGEIEGLN), 43–64 (ELEFLSMANVELSSLARLPSLN), 65–87 (KLRKLELSDNIISGGLEVLAEKC), and 89–110 (NLTYLNLSGNKIKDLSTVEALQ). Residue Lys-68 forms a Glycyl lysine isopeptide (Lys-Gly) (interchain with G-Cter in SUMO2) linkage. The 39-residue stretch at 123–161 (CEITNLEDYRESIFELLQQITYLDGFDQEDNEAPDSEEE) folds into the LRRCT domain. Acidic residues-rich tracts occupy residues 149–208 (DQED…EEEV) and 218–240 (IQDEEDDDDYVDEGEEEEEEEEE). The tract at residues 149 to 260 (DQEDNEAPDS…AEDDGEEDDD (112 aa)) is disordered. A ZID domain region spans residues 207-260 (EVGLSYLMKDEIQDEEDDDDYVDEGEEEEEEEEEGLRGEKRKRDAEDDGEEDDD). Residues 241 to 251 (GLRGEKRKRDA) are compositionally biased toward basic and acidic residues.

The protein belongs to the ANP32 family. In terms of assembly, component of a SWR1-like complex, composed of EP400, KAT5/TIP60, TRRAP, BRD8, RUVBL1, RUVBL2, ING3 and ANP32E; the complex does not contain SRCAP. Interacts with H2A.Z/H2AZ1. Interacts with the importin alpha KPNA1 and KPNA2. Post-translationally, phosphorylated. The phosphorylation is nuclear localization signal (NLS)-dependent. As to expression, expressed at highest levels in cerebellum and spleen. In the cerebellum, expressed mainly in granule cells and, to a lesser extent, in Purkinje cells.

It localises to the cytoplasm. The protein localises to the nucleus. In terms of biological role, histone chaperone that specifically mediates the genome-wide removal of histone H2A.Z/H2AZ1 from the nucleosome: removes H2A.Z/H2AZ1 from its normal sites of deposition, especially from enhancer and insulator regions. Not involved in deposition of H2A.Z/H2AZ1 in the nucleosome. May stabilize the evicted H2A.Z/H2AZ1-H2B dimer, thus shifting the equilibrium towards dissociation and the off-chromatin state. Inhibits activity of protein phosphatase 2A (PP2A). Does not inhibit protein phosphatase 1. May play a role in cerebellar development and synaptogenesis. The protein is Acidic leucine-rich nuclear phosphoprotein 32 family member E (Anp32e) of Mus musculus (Mouse).